A 723-amino-acid chain; its full sequence is Polyribonucleotide nucleotidyltransferase (723 aa).

Positions 488 and 494 each coordinate Mg(2+). A KH domain is found at 555–614 (PRMITMKIHPDKIREVIGKGGSTIQALTKETGTTIDIQEDGTITIASTSTEGMAEAKRRI). The S1 motif domain occupies 624–692 (GKIYAGTVLK…EKGRLRLSLK (69 aa)). Residues 701–723 (SISPINAGESAAPAAPAGGSEQQ) form a disordered region. The span at 707–723 (AGESAAPAAPAGGSEQQ) shows a compositional bias: low complexity.

It belongs to the polyribonucleotide nucleotidyltransferase family. Mg(2+) serves as cofactor.

Its subcellular location is the cytoplasm. It carries out the reaction RNA(n+1) + phosphate = RNA(n) + a ribonucleoside 5'-diphosphate. Involved in mRNA degradation. Catalyzes the phosphorolysis of single-stranded polyribonucleotides processively in the 3'- to 5'-direction. This chain is Polyribonucleotide nucleotidyltransferase, found in Cupriavidus taiwanensis (strain DSM 17343 / BCRC 17206 / CCUG 44338 / CIP 107171 / LMG 19424 / R1) (Ralstonia taiwanensis (strain LMG 19424)).